Consider the following 130-residue polypeptide: UPF0102 protein BT_1882 (130 aa).

It belongs to the UPF0102 family.

This chain is UPF0102 protein BT_1882, found in Bartonella tribocorum (strain CIP 105476 / IBS 506).